The chain runs to 99 residues: Large ribosomal subunit protein uL23 (99 aa).

This sequence belongs to the universal ribosomal protein uL23 family. As to quaternary structure, part of the 50S ribosomal subunit. Contacts protein L29, and trigger factor when it is bound to the ribosome.

Its function is as follows. One of the early assembly proteins it binds 23S rRNA. One of the proteins that surrounds the polypeptide exit tunnel on the outside of the ribosome. Forms the main docking site for trigger factor binding to the ribosome. The sequence is that of Large ribosomal subunit protein uL23 from Lachnospira eligens (strain ATCC 27750 / DSM 3376 / VPI C15-48 / C15-B4) (Eubacterium eligens).